Reading from the N-terminus, the 58-residue chain is Small ribosomal subunit protein bS21 (58 aa).

Residues 31–58 (DLKRIRHHETPVEKYKRKAQQRRRSRRR) form a disordered region. Basic residues predominate over residues 45-58 (YKRKAQQRRRSRRR).

It belongs to the bacterial ribosomal protein bS21 family.

This Prochlorococcus marinus (strain MIT 9303) protein is Small ribosomal subunit protein bS21.